Consider the following 279-residue polypeptide: 4-diphosphocytidyl-2-C-methyl-D-erythritol kinase (279 aa).

Residue Lys-9 is part of the active site. Pro-92–Ser-102 contacts ATP. Asp-134 is a catalytic residue.

The protein belongs to the GHMP kinase family. IspE subfamily.

The catalysed reaction is 4-CDP-2-C-methyl-D-erythritol + ATP = 4-CDP-2-C-methyl-D-erythritol 2-phosphate + ADP + H(+). It participates in isoprenoid biosynthesis; isopentenyl diphosphate biosynthesis via DXP pathway; isopentenyl diphosphate from 1-deoxy-D-xylulose 5-phosphate: step 3/6. In terms of biological role, catalyzes the phosphorylation of the position 2 hydroxy group of 4-diphosphocytidyl-2C-methyl-D-erythritol. The protein is 4-diphosphocytidyl-2-C-methyl-D-erythritol kinase of Syntrophus aciditrophicus (strain SB).